A 345-amino-acid chain; its full sequence is NADH-quinone oxidoreductase subunit H (345 aa).

The Lumenal segment spans residues M1 to L15. A helical membrane pass occupies residues L16–W35. The Cytoplasmic segment spans residues G36–L86. The helical transmembrane segment at A87–E106 threads the bilayer. Residues G107–M110 lie on the Lumenal side of the membrane. Residues A111–G130 form a helical membrane-spanning segment. The Cytoplasmic portion of the chain corresponds to V131–S156. The chain crosses the membrane as a helical span at residues Y157–N176. The Lumenal segment spans residues L177–L191. Residues N192 to A211 form a helical membrane-spanning segment. The Cytoplasmic portion of the chain corresponds to E212–A245. Residues G246–G265 traverse the membrane as a helical segment. Residues W266–G276 lie on the Lumenal side of the membrane. The helical transmembrane segment at V277–A296 threads the bilayer. Over I297–V313 the chain is Cytoplasmic. The helical transmembrane segment at F314–V333 threads the bilayer. The Lumenal portion of the chain corresponds to L334 to A345.

It belongs to the complex I subunit 1 family. As to quaternary structure, NDH-1 is composed of 14 different subunits. Subunits NuoA, H, J, K, L, M, N constitute the membrane sector of the complex.

Its subcellular location is the cellular chromatophore membrane. It catalyses the reaction a quinone + NADH + 5 H(+)(in) = a quinol + NAD(+) + 4 H(+)(out). In terms of biological role, NDH-1 shuttles electrons from NADH, via FMN and iron-sulfur (Fe-S) centers, to quinones in the respiratory chain. The immediate electron acceptor for the enzyme in this species is believed to be ubiquinone. Couples the redox reaction to proton translocation (for every two electrons transferred, four hydrogen ions are translocated across the cytoplasmic membrane), and thus conserves the redox energy in a proton gradient. This subunit may bind ubiquinone. The polypeptide is NADH-quinone oxidoreductase subunit H (Rhodobacter capsulatus (Rhodopseudomonas capsulata)).